The sequence spans 504 residues: ATP synthase subunit alpha 2 (504 aa).

169–176 is an ATP binding site; it reads GDRQTGKT.

The protein belongs to the ATPase alpha/beta chains family. In terms of assembly, F-type ATPases have 2 components, CF(1) - the catalytic core - and CF(0) - the membrane proton channel. CF(1) has five subunits: alpha(3), beta(3), gamma(1), delta(1), epsilon(1). CF(0) has three main subunits: a(1), b(2) and c(9-12). The alpha and beta chains form an alternating ring which encloses part of the gamma chain. CF(1) is attached to CF(0) by a central stalk formed by the gamma and epsilon chains, while a peripheral stalk is formed by the delta and b chains.

Its subcellular location is the cell membrane. The enzyme catalyses ATP + H2O + 4 H(+)(in) = ADP + phosphate + 5 H(+)(out). Produces ATP from ADP in the presence of a proton gradient across the membrane. The alpha chain is a regulatory subunit. The protein is ATP synthase subunit alpha 2 of Listeria innocua serovar 6a (strain ATCC BAA-680 / CLIP 11262).